The following is a 72-amino-acid chain: Cytochrome c oxidase subunit 2 (72 aa).

The Mitochondrial intermembrane portion of the chain corresponds to 1 to 14 (MAHPSQLGFQDAAS). A helical transmembrane segment spans residues 15–45 (PVMEELLHFHDHALMIVFLISTLVLYIIVAM). Residues 46-72 (VSTKLTNKHILDSQEVEIVWTILPAVI) lie on the Mitochondrial matrix side of the membrane.

The protein belongs to the cytochrome c oxidase subunit 2 family. As to quaternary structure, component of the cytochrome c oxidase (complex IV, CIV), a multisubunit enzyme composed of 14 subunits. The complex is composed of a catalytic core of 3 subunits MT-CO1, MT-CO2 and MT-CO3, encoded in the mitochondrial DNA, and 11 supernumerary subunits COX4I, COX5A, COX5B, COX6A, COX6B, COX6C, COX7A, COX7B, COX7C, COX8 and NDUFA4, which are encoded in the nuclear genome. The complex exists as a monomer or a dimer and forms supercomplexes (SCs) in the inner mitochondrial membrane with NADH-ubiquinone oxidoreductase (complex I, CI) and ubiquinol-cytochrome c oxidoreductase (cytochrome b-c1 complex, complex III, CIII), resulting in different assemblies (supercomplex SCI(1)III(2)IV(1) and megacomplex MCI(2)III(2)IV(2)). Found in a complex with TMEM177, COA6, COX18, COX20, SCO1 and SCO2. Interacts with TMEM177 in a COX20-dependent manner. Interacts with COX20. Interacts with COX16. Cu cation serves as cofactor.

It localises to the mitochondrion inner membrane. The catalysed reaction is 4 Fe(II)-[cytochrome c] + O2 + 8 H(+)(in) = 4 Fe(III)-[cytochrome c] + 2 H2O + 4 H(+)(out). Component of the cytochrome c oxidase, the last enzyme in the mitochondrial electron transport chain which drives oxidative phosphorylation. The respiratory chain contains 3 multisubunit complexes succinate dehydrogenase (complex II, CII), ubiquinol-cytochrome c oxidoreductase (cytochrome b-c1 complex, complex III, CIII) and cytochrome c oxidase (complex IV, CIV), that cooperate to transfer electrons derived from NADH and succinate to molecular oxygen, creating an electrochemical gradient over the inner membrane that drives transmembrane transport and the ATP synthase. Cytochrome c oxidase is the component of the respiratory chain that catalyzes the reduction of oxygen to water. Electrons originating from reduced cytochrome c in the intermembrane space (IMS) are transferred via the dinuclear copper A center (CU(A)) of subunit 2 and heme A of subunit 1 to the active site in subunit 1, a binuclear center (BNC) formed by heme A3 and copper B (CU(B)). The BNC reduces molecular oxygen to 2 water molecules using 4 electrons from cytochrome c in the IMS and 4 protons from the mitochondrial matrix. The sequence is that of Cytochrome c oxidase subunit 2 (mt-co2) from Atractosteus spatula (Alligator gar).